The primary structure comprises 256 residues: LexA repressor (256 aa).

The interval 1–31 (MTSQGRGTRRGGTRGNVRAFPEGPTDAGLTP) is disordered. A DNA-binding region (H-T-H motif) is located at residues 53–73 (VREIGEAVGLTSTSSVAHQLK). Active-site for autocatalytic cleavage activity residues include serine 180 and lysine 217.

This sequence belongs to the peptidase S24 family. In terms of assembly, homodimer.

The enzyme catalyses Hydrolysis of Ala-|-Gly bond in repressor LexA.. Functionally, represses a number of genes involved in the response to DNA damage (SOS response), including recA and lexA. In the presence of single-stranded DNA, RecA interacts with LexA causing an autocatalytic cleavage which disrupts the DNA-binding part of LexA, leading to derepression of the SOS regulon and eventually DNA repair. This chain is LexA repressor, found in Frankia casuarinae (strain DSM 45818 / CECT 9043 / HFP020203 / CcI3).